We begin with the raw amino-acid sequence, 851 residues long: Envelope glycoprotein gp160 (851 aa).

The signal sequence occupies residues 1–32 (MRVKEKYQHLWRWGWRWGTMLLGMLMICSATE). Topologically, residues 33-679 (KLWVTVYFGV…ITNWLWYIKL (647 aa)) are extracellular. The cysteines at positions 54 and 74 are disulfide-linked. Residues asparagine 88, asparagine 136, asparagine 141, asparagine 156, asparagine 160, asparagine 186, asparagine 197, asparagine 230, asparagine 234, asparagine 241, asparagine 262, asparagine 276, asparagine 295, asparagine 301, asparagine 332, asparagine 339, and asparagine 356 are each glycosylated (N-linked (GlcNAc...) asparagine; by host). Cystine bridges form between cysteine 119-cysteine 205, cysteine 126-cysteine 196, cysteine 131-cysteine 157, cysteine 218-cysteine 247, and cysteine 228-cysteine 239. The segment at 131–156 (CTDLKNDTNTNSSSGRMIMEKGEIKN) is V1. The segment at 157 to 196 (CSFNISTSKRGKVQKEYAFFYKLDIIPIDNDTTSYTLTSC) is V2. A V3 region spans residues 296–330 (CTRPNNNTRKKIRIQRGPGRAFVTIGKIGNMRQAH). Residues cysteine 296 and cysteine 331 are joined by a disulfide bond. A CD4-binding loop region spans residues 364–374 (SSGGDPEIVTH). 2 cysteine pairs are disulfide-bonded: cysteine 378–cysteine 440 and cysteine 385–cysteine 413. The tract at residues 385–413 (CNSTQLFNSTWSTKGSNNTEGSDTITLPC) is V4. Residues asparagine 386, asparagine 392, asparagine 401, asparagine 443, and asparagine 458 are each glycosylated (N-linked (GlcNAc...) asparagine; by host). 2 V5 regions span residues 456-466 (SNNESEIFRPG) and 458-466 (NESEIFRPG). The segment at 507–527 (AVGIGALFLGFLGAAGSTMGA) is fusion peptide. The immunosuppression stretch occupies residues 569 to 587 (KQLQARILAVERYLKDQQL). Residues cysteine 593 and cysteine 599 are joined by a disulfide bond. N-linked (GlcNAc...) asparagine; by host glycans are attached at residues asparagine 606, asparagine 611, asparagine 620, asparagine 632, and asparagine 669. Residues 628 to 662 (REINNYTSLIHSLIEESQNQQEKNEQELLELDKWA) adopt a coiled-coil conformation. The tract at residues 657–678 (ELDKWASLWNWFNITNWLWYIK) is MPER; binding to GalCer. A helical transmembrane segment spans residues 680 to 700 (FIMIVGGLVGLRIVFAVLSIV). The Cytoplasmic segment spans residues 701–851 (NRVRQGYSPL…IRQGLERILL (151 aa)). Residues 707–710 (YSPL) carry the YXXL motif; contains endocytosis signal motif. A disordered region spans residues 713-735 (QTHLPNPRGPDRPEGIEEEGGER). Cysteine 759 carries S-palmitoyl cysteine; by host lipidation. A Di-leucine internalization motif motif is present at residues 850-851 (LL).

The protein belongs to the HIV-1 env protein family. In terms of assembly, the mature envelope protein (Env) consists of a homotrimer of non-covalently associated gp120-gp41 heterodimers. The resulting complex protrudes from the virus surface as a spike. There seems to be as few as 10 spikes on the average virion. Interacts with host CD4, CCR5 and CXCR4. Gp120 also interacts with the C-type lectins CD209/DC-SIGN and CLEC4M/DC-SIGNR (collectively referred to as DC-SIGN(R)). Gp120 and gp41 interact with GalCer. Gp120 interacts with host ITGA4/ITGB7 complex; on CD4+ T-cells, this interaction results in rapid activation of integrin ITGAL/LFA-1, which facilitates efficient cell-to-cell spreading of HIV-1. Gp120 interacts with cell-associated heparan sulfate; this interaction increases virus infectivity on permissive cells and may be involved in infection of CD4- cells. The mature envelope protein (Env) consists of a homotrimer of non-covalently associated gp120-gp41 heterodimers. The resulting complex protrudes from the virus surface as a spike. There seems to be as few as 10 spikes on the average virion. Highly glycosylated by host. The high number of glycan on the protein is reffered to as 'glycan shield' because it contributes to hide protein sequence from adaptive immune system. Post-translationally, palmitoylation of the transmembrane protein and of Env polyprotein (prior to its proteolytic cleavage) is essential for their association with host cell membrane lipid rafts. Palmitoylation is therefore required for envelope trafficking to classical lipid rafts, but not for viral replication. In terms of processing, specific enzymatic cleavages in vivo yield mature proteins. Envelope glycoproteins are synthesized as an inactive precursor that is heavily N-glycosylated and processed likely by host cell furin in the Golgi to yield the mature SU and TM proteins. The cleavage site between SU and TM requires the minimal sequence [KR]-X-[KR]-R. About 2 of the 9 disulfide bonds of gp41 are reduced by P4HB/PDI, following binding to CD4 receptor.

It localises to the virion membrane. The protein resides in the host cell membrane. It is found in the host endosome membrane. In terms of biological role, oligomerizes in the host endoplasmic reticulum into predominantly trimers. In a second time, gp160 transits in the host Golgi, where glycosylation is completed. The precursor is then proteolytically cleaved in the trans-Golgi and thereby activated by cellular furin or furin-like proteases to produce gp120 and gp41. Functionally, attaches the virus to the host lymphoid cell by binding to the primary receptor CD4. This interaction induces a structural rearrangement creating a high affinity binding site for a chemokine coreceptor like CXCR4 and/or CCR5. Acts as a ligand for CD209/DC-SIGN and CLEC4M/DC-SIGNR, which are respectively found on dendritic cells (DCs), and on endothelial cells of liver sinusoids and lymph node sinuses. These interactions allow capture of viral particles at mucosal surfaces by these cells and subsequent transmission to permissive cells. HIV subverts the migration properties of dendritic cells to gain access to CD4+ T-cells in lymph nodes. Virus transmission to permissive T-cells occurs either in trans (without DCs infection, through viral capture and transmission), or in cis (following DCs productive infection, through the usual CD4-gp120 interaction), thereby inducing a robust infection. In trans infection, bound virions remain infectious over days and it is proposed that they are not degraded, but protected in non-lysosomal acidic organelles within the DCs close to the cell membrane thus contributing to the viral infectious potential during DCs' migration from the periphery to the lymphoid tissues. On arrival at lymphoid tissues, intact virions recycle back to DCs' cell surface allowing virus transmission to CD4+ T-cells. Its function is as follows. Acts as a class I viral fusion protein. Under the current model, the protein has at least 3 conformational states: pre-fusion native state, pre-hairpin intermediate state, and post-fusion hairpin state. During fusion of viral and target intracellular membranes, the coiled coil regions (heptad repeats) assume a trimer-of-hairpins structure, positioning the fusion peptide in close proximity to the C-terminal region of the ectodomain. The formation of this structure appears to drive apposition and subsequent fusion of viral and target cell membranes. Complete fusion occurs in host cell endosomes and is dynamin-dependent, however some lipid transfer might occur at the plasma membrane. The virus undergoes clathrin-dependent internalization long before endosomal fusion, thus minimizing the surface exposure of conserved viral epitopes during fusion and reducing the efficacy of inhibitors targeting these epitopes. Membranes fusion leads to delivery of the nucleocapsid into the cytoplasm. The protein is Envelope glycoprotein gp160 of Homo sapiens (Human).